The chain runs to 587 residues: Lipoprotein LpqB (587 aa).

The first 19 residues, 1–19 (MERLMRLTILLFLGAVLAG), serve as a signal peptide directing secretion. The N-palmitoyl cysteine moiety is linked to residue Cys20. Residue Cys20 is the site of S-diacylglycerol cysteine attachment.

This sequence belongs to the LpqB lipoprotein family. In terms of assembly, interacts with MtrB, probably extracytoplasmically.

Its subcellular location is the cell membrane. The protein localises to the secreted. It is found in the cell wall. May modulate activity of the MtrAB system in controlling homeostasis of the cell wall and cell division. This is Lipoprotein LpqB from Mycobacterium tuberculosis (strain CDC 1551 / Oshkosh).